The sequence spans 365 residues: tRNA(Met) cytidine acetate ligase (365 aa).

Residues 7-20 (IAEF…HKYL), Gly-96, Asn-152, and Arg-175 contribute to the ATP site.

It belongs to the TmcAL family.

It localises to the cytoplasm. It catalyses the reaction cytidine(34) in elongator tRNA(Met) + acetate + ATP = N(4)-acetylcytidine(34) in elongator tRNA(Met) + AMP + diphosphate. Functionally, catalyzes the formation of N(4)-acetylcytidine (ac(4)C) at the wobble position of elongator tRNA(Met), using acetate and ATP as substrates. First activates an acetate ion to form acetyladenylate (Ac-AMP) and then transfers the acetyl group to tRNA to form ac(4)C34. The chain is tRNA(Met) cytidine acetate ligase from Streptococcus pneumoniae (strain Taiwan19F-14).